Reading from the N-terminus, the 331-residue chain is Meiotic recombination protein W68 (331 aa).

The Topo IIA-type catalytic domain occupies 1–120 (MDEFSENIER…LGILAASKGL (120 aa)). The active-site O-(5'-phospho-DNA)-tyrosine intermediate is the Tyr81. 2 residues coordinate Mg(2+): Glu167 and Asp221.

This sequence belongs to the TOP6A family. Mg(2+) is required as a cofactor.

It localises to the nucleus. The enzyme catalyses ATP-dependent breakage, passage and rejoining of double-stranded DNA.. In terms of biological role, required for meiotic recombination. Together with mei-P22, mediates DNA cleavage that forms the double-strand breaks (DSB) that initiate meiotic recombination. This chain is Meiotic recombination protein W68, found in Drosophila melanogaster (Fruit fly).